The following is a 245-amino-acid chain: Precorrin-2 C(20)-methyltransferase (245 aa).

The protein belongs to the precorrin methyltransferase family. As to quaternary structure, homodimer.

It carries out the reaction precorrin-2 + S-adenosyl-L-methionine = precorrin-3A + S-adenosyl-L-homocysteine + H(+). The protein operates within cofactor biosynthesis; adenosylcobalamin biosynthesis; cob(II)yrinate a,c-diamide from precorrin-2 (aerobic route): step 1/10. Methylates precorrin-2 at the C-20 position to produce precorrin-3A. This Sinorhizobium sp protein is Precorrin-2 C(20)-methyltransferase (cobI).